Here is a 158-residue protein sequence, read N- to C-terminus: MLSPKRVKFRKMQRGRMRGVATRGNTIAFGEFALQAQECGWITSRQIEASRRAMTRYVKRGGKIWIRIFPDKSITMRAAETRMGSGKGNPEFWVAVIKPGRILFEMGGAEITPEIAKEAMRLAQYKLPVKTKFIALDEQQKQSAAEAPAAAEAVNVES.

Belongs to the universal ribosomal protein uL16 family. In terms of assembly, part of the 50S ribosomal subunit.

Functionally, binds 23S rRNA and is also seen to make contacts with the A and possibly P site tRNAs. The polypeptide is Large ribosomal subunit protein uL16 (Parasynechococcus marenigrum (strain WH8102)).